Consider the following 402-residue polypeptide: Coiled-coil domain-containing protein 188 (402 aa).

Disordered stretches follow at residues Met1–Leu30, His50–Ala74, and His108–Cys131. Positions Gly154–Gly189 form a coiled coil. Residues Leu347–Val363 traverse the membrane as a helical segment.

The protein resides in the membrane. This chain is Coiled-coil domain-containing protein 188, found in Homo sapiens (Human).